Reading from the N-terminus, the 925-residue chain is Nonribosomal peptide synthetase apvA (925 aa).

The interval 15–436 (AREDSGHVVV…TGRAKENMII (422 aa)) is adenylation (A) domain. The region spanning 564–644 (EPQNDLEKTL…DLATALEKLQ (81 aa)) is the Carrier domain. At Ser601 the chain carries O-(pantetheine 4'-phosphoryl)serine. The tract at residues 663 to 909 (PLWLVHPGAG…HYSMIGPDHV (247 aa)) is thioesterase (TE) domain.

It belongs to the NRP synthetase family. ApvA specifically produces aspulvinone E in hyphea, in contrast to melA which produces aspulvinone E in conidia where it is converted to UV-protective Asp-melanin.

The enzyme catalyses 2 3-(4-hydroxyphenyl)pyruvate + AH2 + 2 ATP + O2 = aspulvinone E + A + 2 AMP + CO2 + 2 diphosphate + H2O + H(+). It functions in the pathway secondary metabolite biosynthesis. Functionally, nonribosomal peptide synthetase; part of the gene cluster that mediates the biosynthesis of aspulvinones. The nonribosomal peptide synthetase apvA is responsible for the production of aspulvinone E, the core structure of aspulvinones. ApvA first activates 4-hydroxyphenylpyruvate (HPPA) through its A domain to AMP-HPPA. The HPPA unit is then loaded to the T domain and eventually transferred to the TE domain. Upon loading of another HPPA unit to the T domain, the TE domain promotes the enolate formation on the unit attached. The next step involves head to tail Claisen condensation, followed by the keto-enol tautermerization and a nucleophilic attack on the carbonyl carbon to yield the furanone partial structure. A spontaneous oxidation at the beta-carbon of the thioester might occur in aerobic condition. The TE domain then catalyzes the hydrolysis of the thioester, followed by spontaneous decarboxylation, dehydroxylation and keto-enol tautermerization to give the aspulvinone core. Aspulvinone E is highly unstable and converted to isoaspulvinone E in the presence of light. The structural diversity of the aspulvinones suggests that other tailoring enzymes are involved and have still to be identified. This Aspergillus terreus (strain NIH 2624 / FGSC A1156) protein is Nonribosomal peptide synthetase apvA.